The primary structure comprises 554 residues: Inactive sesquithujene synthase (554 aa).

The Mg(2+) site is built by aspartate 308 and aspartate 312. Substrate contacts are provided by aspartate 308, aspartate 312, arginine 449, and asparagine 452. Positions 308 to 312 match the DDXXD motif motif; that stretch reads DDMFD. Mg(2+) is bound by residues asparagine 452, serine 456, and glutamate 460.

The protein belongs to the terpene synthase family. In terms of assembly, monomer. Requires Mg(2+) as cofactor. It depends on Mn(2+) as a cofactor.

It localises to the cytoplasm. Its pathway is secondary metabolite biosynthesis; terpenoid biosynthesis. Non-functional sesquiterpene synthase having less than 1% of the activity found in cv. Delprim. In Zea mays (Maize), this protein is Inactive sesquithujene synthase.